A 174-amino-acid chain; its full sequence is Chromophore lyase CpcS/CpeS 1 (174 aa).

This sequence belongs to the CpcS/CpeS biliprotein lyase family.

Covalently attaches a chromophore to Cys residue(s) of phycobiliproteins. The sequence is that of Chromophore lyase CpcS/CpeS 1 from Trichodesmium erythraeum (strain IMS101).